The sequence spans 150 residues: Large ribosomal subunit protein bL9 (150 aa).

The protein belongs to the bacterial ribosomal protein bL9 family.

Its function is as follows. Binds to the 23S rRNA. The protein is Large ribosomal subunit protein bL9 of Desulforudis audaxviator (strain MP104C).